Consider the following 668-residue polypeptide: DNA ligase (668 aa).

Residues 32 to 36 (DAEYD), 81 to 82 (SL), and Glu-113 each bind NAD(+). Lys-115 (N6-AMP-lysine intermediate) is an active-site residue. The NAD(+) site is built by Arg-136, Glu-173, Lys-289, and Lys-313. Cys-407, Cys-410, Cys-425, and Cys-431 together coordinate Zn(2+). Residues 590-668 (ASEQPFAGKT…EEELQQALQG (79 aa)) form the BRCT domain.

Belongs to the NAD-dependent DNA ligase family. LigA subfamily. The cofactor is Mg(2+). Requires Mn(2+) as cofactor.

It carries out the reaction NAD(+) + (deoxyribonucleotide)n-3'-hydroxyl + 5'-phospho-(deoxyribonucleotide)m = (deoxyribonucleotide)n+m + AMP + beta-nicotinamide D-nucleotide.. Functionally, DNA ligase that catalyzes the formation of phosphodiester linkages between 5'-phosphoryl and 3'-hydroxyl groups in double-stranded DNA using NAD as a coenzyme and as the energy source for the reaction. It is essential for DNA replication and repair of damaged DNA. The polypeptide is DNA ligase (Aeromonas hydrophila subsp. hydrophila (strain ATCC 7966 / DSM 30187 / BCRC 13018 / CCUG 14551 / JCM 1027 / KCTC 2358 / NCIMB 9240 / NCTC 8049)).